Here is a 103-residue protein sequence, read N- to C-terminus: Defensin-like protein 290 (103 aa).

The signal sequence occupies residues 1–29 (MTALRRTISIIFVFYLSCTLFVNIFGVQA). Disulfide bonds link cysteine 33–cysteine 50, cysteine 39–cysteine 55, cysteine 43–cysteine 57, cysteine 72–cysteine 92, cysteine 78–cysteine 98, and cysteine 84–cysteine 100.

Belongs to the DEFL family.

It localises to the secreted. This is Defensin-like protein 290 from Arabidopsis thaliana (Mouse-ear cress).